A 197-amino-acid polypeptide reads, in one-letter code: Peptide deformylase (197 aa).

2 residues coordinate Fe cation: Cys106 and His148. Residue Glu149 is part of the active site. His152 contributes to the Fe cation binding site.

The protein belongs to the polypeptide deformylase family. Fe(2+) serves as cofactor.

It catalyses the reaction N-terminal N-formyl-L-methionyl-[peptide] + H2O = N-terminal L-methionyl-[peptide] + formate. Functionally, removes the formyl group from the N-terminal Met of newly synthesized proteins. Requires at least a dipeptide for an efficient rate of reaction. N-terminal L-methionine is a prerequisite for activity but the enzyme has broad specificity at other positions. The polypeptide is Peptide deformylase (Mycobacterium tuberculosis (strain ATCC 25177 / H37Ra)).